The chain runs to 394 residues: Guanine nucleotide-binding protein G(s) subunit alpha (394 aa).

Positions 1–25 (MGCLGDSKTEDQRNEEKAQREANKK) are disordered. Gly2 carries the N-palmitoyl glycine lipid modification. Cys3 is lipidated: S-palmitoyl cysteine. Basic and acidic residues predominate over residues 7–25 (SKTEDQRNEEKAQREANKK). One can recognise a G-alpha domain in the interval 39 to 394 (ATHRLLLLGA…RMHLRQYELL (356 aa)). The segment at 42–55 (RLLLLGAGESGKST) is G1 motif. GTP is bound at residue 47–55 (GAGESGKST). A Mg(2+)-binding site is contributed by Ser54. A disordered region spans residues 68-90 (FNGEGGEEDPQAARSNSDGEKAT). Positions 196 to 204 (DLLRCRVLT) are G2 motif. Residues 197–204 (LLRCRVLT), 223–227 (DVGGQ), 292–295 (NKQD), and Ala366 each bind GTP. Residue Thr204 coordinates Mg(2+). Positions 219–228 (FHMFDVGGQR) are G3 motif. The tract at residues 288–295 (ILFLNKQD) is G4 motif. The tract at residues 364–369 (TCAVDT) is G5 motif.

Belongs to the G-alpha family. G(s) subfamily. As to quaternary structure, heterotrimeric G proteins are composed of 3 units; alpha, beta and gamma. The alpha chain contains the guanine nucleotide binding site. Interacts with CRY1; the interaction may block GPCR-mediated regulation of cAMP concentrations. Interacts with ADCY6 and stimulates its adenylyl cyclase activity. Interacts with ADCY2 and ADCY5. Stimulates the ADCY5 adenylyl cyclase activity. Interaction with SASH1.

Its subcellular location is the cell membrane. In terms of biological role, guanine nucleotide-binding proteins (G proteins) function as transducers in numerous signaling pathways controlled by G protein-coupled receptors (GPCRs). Signaling involves the activation of adenylyl cyclases, resulting in increased levels of the signaling molecule cAMP. GNAS functions downstream of several GPCRs, including beta-adrenergic receptors. Stimulates the Ras signaling pathway via RAPGEF2. In Cricetulus longicaudatus (Long-tailed dwarf hamster), this protein is Guanine nucleotide-binding protein G(s) subunit alpha (GNAS).